The primary structure comprises 80 residues: Exodeoxyribonuclease 7 small subunit (80 aa).

It belongs to the XseB family. In terms of assembly, heterooligomer composed of large and small subunits.

It is found in the cytoplasm. It carries out the reaction Exonucleolytic cleavage in either 5'- to 3'- or 3'- to 5'-direction to yield nucleoside 5'-phosphates.. Its function is as follows. Bidirectionally degrades single-stranded DNA into large acid-insoluble oligonucleotides, which are then degraded further into small acid-soluble oligonucleotides. The sequence is that of Exodeoxyribonuclease 7 small subunit from Phenylobacterium zucineum (strain HLK1).